We begin with the raw amino-acid sequence, 281 residues long: 2-dehydro-3-deoxyphosphooctonate aldolase (281 aa).

Belongs to the KdsA family.

Its subcellular location is the cytoplasm. The catalysed reaction is D-arabinose 5-phosphate + phosphoenolpyruvate + H2O = 3-deoxy-alpha-D-manno-2-octulosonate-8-phosphate + phosphate. It functions in the pathway carbohydrate biosynthesis; 3-deoxy-D-manno-octulosonate biosynthesis; 3-deoxy-D-manno-octulosonate from D-ribulose 5-phosphate: step 2/3. Its pathway is bacterial outer membrane biogenesis; lipopolysaccharide biosynthesis. The chain is 2-dehydro-3-deoxyphosphooctonate aldolase from Azotobacter vinelandii (strain DJ / ATCC BAA-1303).